The following is a 333-amino-acid chain: Glycerol-3-phosphate dehydrogenase [NAD(P)+] (333 aa).

2 residues coordinate NADPH: W15 and K108. Residues K108, G136, and S138 each contribute to the sn-glycerol 3-phosphate site. A140 serves as a coordination point for NADPH. Positions 191, 244, 254, 255, and 256 each coordinate sn-glycerol 3-phosphate. K191 functions as the Proton acceptor in the catalytic mechanism. Residue R255 participates in NADPH binding. V279 and E281 together coordinate NADPH.

This sequence belongs to the NAD-dependent glycerol-3-phosphate dehydrogenase family.

It localises to the cytoplasm. The enzyme catalyses sn-glycerol 3-phosphate + NAD(+) = dihydroxyacetone phosphate + NADH + H(+). It carries out the reaction sn-glycerol 3-phosphate + NADP(+) = dihydroxyacetone phosphate + NADPH + H(+). It participates in membrane lipid metabolism; glycerophospholipid metabolism. Functionally, catalyzes the reduction of the glycolytic intermediate dihydroxyacetone phosphate (DHAP) to sn-glycerol 3-phosphate (G3P), the key precursor for phospholipid synthesis. In Maricaulis maris (strain MCS10) (Caulobacter maris), this protein is Glycerol-3-phosphate dehydrogenase [NAD(P)+].